We begin with the raw amino-acid sequence, 241 residues long: Terpene cyclase pyr4 (241 aa).

7 helical membrane-spanning segments follow: residues Ile20–Ile40, Tyr49–Ile69, Ala79–Ala99, Leu113–Ala133, Ala141–Met161, Gly168–Leu188, and Phe206–Trp226.

Belongs to the paxB family.

Its subcellular location is the membrane. It catalyses the reaction 2-oxo-3-[(8S)-epoxy-(2E,6E)-farnesyl]-6-(pyridin-3-yl)-2H-pyran-4-olate + H(+) = deacetylpyripyropene E. It participates in secondary metabolite biosynthesis; terpenoid biosynthesis. Terpene cyclase; part of the gene cluster that mediates the biosynthesis of pyripyropene A, a specific human acyl-coenzyme A:cholesterol acyltransferase 2 inhibitor. The first step of the pathway is the synthesis of nicotinyl-CoA from nicotinic acid by the nicotinic acid-CoA ligase pyr1. Nicotinyl-CoA is then a substrate of polyketide synthase pyr2 to produce 4-hydroxy-6-(3-pyridinyl)-2H-pyran-2-one (HPPO) which is further prenylated by the polyprenyl transferase pyr6 to yield farnesyl-HPPO. The next steps consist of an epoxidation of farnesyl-HPPO to epoxyfarnesyl-HPPO by FAD-dependent monooxygenase pyr5 and a cyclization of the terpenoid portion by the terpene cyclase pyr4 to yield deacetyl-pyripyropene E. The 2 cytochrome P450 monooxygenases pyr3 and pyr9, and the 2 acetyltransferases pyr7 and pyr8 are involved in the conversion of deacetyl-pyripyropene E into pyripyropene A through several cycles of oxidation and acetylation steps. Pyr7 acetylates deacetyl-pyripyropene E to pyripyropene E which is oxidized to 11-deacetyl-pyripyropene O by pyr3, which is in turn acetylated into pyripyropene O by pyr8. Pyripyropene O is then oxidized to deacetyl-pyripyropene A by pyr9. Deacetyl-pyripyropene A is finally acetylated to pyripyropene A by pyr8. The protein is Terpene cyclase pyr4 of Aspergillus fumigatus (strain ATCC MYA-4609 / CBS 101355 / FGSC A1100 / Af293) (Neosartorya fumigata).